A 724-amino-acid chain; its full sequence is Solute carrier organic anion transporter family member 4C1 (724 aa).

Residues 1 to 105 (MKSAKGIENL…QCLQRCNTPG (105 aa)) lie on the Cytoplasmic side of the membrane. Residues serine 15, serine 16, serine 24, serine 26, and serine 28 each carry the phosphoserine modification. The tract at residues 24–71 (SASPSQVEVSALSSDPQRENSQPQELQKPQEPQKSPEPSLPSAPPNVS) is disordered. Over residues 25–38 (ASPSQVEVSALSSD) the composition is skewed to polar residues. Residues 44-60 (SQPQELQKPQEPQKSPE) are compositionally biased toward low complexity. The chain crosses the membrane as a helical span at residues 106-126 (GFLLHYCLLAVTQGIVVNGLV). At 127-145 (NISISTIEKRYEMKSSLTG) the chain is on the extracellular side. A helical membrane pass occupies residues 146–166 (LISSSYDISFCLLSLFVSFFG). The Cytoplasmic portion of the chain corresponds to 167–172 (ERGHKP). The chain crosses the membrane as a helical span at residues 173-197 (RWLAFAAFMIGLGALVFSLPQFFSG). The Extracellular portion of the chain corresponds to 198–224 (EYKLGSLFEDTCVTTRNSTSCTSSTSS). A helical transmembrane segment spans residues 225 to 254 (LSNYLYVFILGQLLLGAGGTPLYTLGTAFL). Residues 255–274 (DDSVPTHKSSLYIGTGYAMS) are Cytoplasmic-facing. Residues 275–295 (ILGPAIGYVLGGQLLTIYVDV) traverse the membrane as a helical segment. The Extracellular portion of the chain corresponds to 296–311 (AMGESTDITEDDPRWL). A helical transmembrane segment spans residues 312–336 (GAWWIGFLLSWIFAWSLIIPFSCFP). At 337 to 377 (KHLPGTAEIQAGKTSQAHQSNSNADAKFGKSIKDFPAALKN) the chain is on the cytoplasmic side. A helical membrane pass occupies residues 378–399 (LMKNAVFMCLVLSTSSEALITT). The Extracellular segment spans residues 400-419 (GFATFLPKFIENQFGLTSSF). A helical membrane pass occupies residues 420–443 (AATLGGAVLIPGAALGQILGGFLV). Over 444 to 447 (SKFK) the chain is Cytoplasmic. Residues 448-471 (MTCKNTMKFALFTSGVALTLSFVF) form a helical membrane-spanning segment. Residues 472–580 (IYAKCGNEPF…ETHCAKLPIF (109 aa)) lie on the Extracellular side of the membrane. One can recognise a Kazal-like domain in the interval 495–549 (GNLIAPCNANCNCLRSYYYPVCGDGVQYFSPCFAGCSNSVAHRKPKVYYNCSCIE). Intrachain disulfides connect cysteine 501–cysteine 530, cysteine 507–cysteine 526, and cysteine 516–cysteine 547. The helical transmembrane segment at 581-603 (LCIFFIVIIFTFMAGTPITVSIL) threads the bilayer. Over 604–612 (RCVNHRQRS) the chain is Cytoplasmic. Residues 613-638 (LALGIQFMVLRLLGTIPGPIIFGFTI) form a helical membrane-spanning segment. The Extracellular portion of the chain corresponds to 639–672 (DSTCILWDINDCGIKGACRIYDNIKMAHMLVAIS). Residues 673-690 (VTCKVITMFFNGFAIFLY) traverse the membrane as a helical segment. Residues 691–724 (KPPPSATDLSFHKENAVVTNVLAEQDLNKIVKEG) are Cytoplasmic-facing.

The protein belongs to the organo anion transporter (TC 2.A.60) family.

The protein localises to the basolateral cell membrane. It catalyses the reaction estrone 3-sulfate(out) = estrone 3-sulfate(in). The catalysed reaction is L-thyroxine(out) = L-thyroxine(in). The enzyme catalyses 3,3',5-triiodo-L-thyronine(out) = 3,3',5-triiodo-L-thyronine(in). It carries out the reaction chenodeoxycholate(out) = chenodeoxycholate(in). It catalyses the reaction glycocholate(out) = glycocholate(in). The catalysed reaction is L-homoarginine(in) = L-homoarginine(out). The enzyme catalyses L-arginine(in) = L-arginine(out). It carries out the reaction N(omega),N(omega)-dimethyl-L-arginine(out) = N(omega),N(omega)-dimethyl-L-arginine(in). Its function is as follows. Mediates the transport of organic anions such as steroids (estrone 3-sulfate, chenodeoxycholate, glycocholate) and thyroid hormones (3,3',5-triiodo-L-thyronine (T3), L-thyroxine (T4)), in the kidney. Capable of transporting cAMP and pharmacological substances such as digoxin, ouabain and methotrexate. Transport is independent of sodium, chloride ion, and ATP. Transport activity is stimulated by an acidic extracellular environment due to increased substrate affinity to the transporter. The driving force for this transport activity is currently not known. The role of hydrogencarbonate (HCO3(-), bicarbonate) as the probable counteranion that exchanges for organic anions is still not well defined. Functions as an uptake transporter at the apical membrane, suggesting a role in renal reabsorption. Involved in the renal secretion of the uremic toxin ADMA (N(omega),N(omega)-dimethyl-L-arginine or asymmetrical dimethylarginine), which is associated to cardiovascular events and mortality, and the structurally related amino acids L-arginine and L-homoarginine (a cardioprotective biomarker). Can act bidirectionally, suggesting a dual protective role of this transport protein; exporting L-homoarginine after being synthesized in proximal tubule cells, and mediating uptake of ADMA from the blood into proximal tubule cells where it is degraded by the enzyme dimethylarginine dimethylaminohydrolase 1 (DDAH1). May be involved in sperm maturation by enabling directed movement of organic anions and compounds within or between cells. This ion-transporting process is important to maintain the strict epididymal homeostasis necessary for sperm maturation. May have a role in secretory functions since seminal vesicle epithelial cells are assumed to secrete proteins involved in decapacitation by modifying surface proteins to facilitate the acquisition of the ability to fertilize the egg. In Pongo abelii (Sumatran orangutan), this protein is Solute carrier organic anion transporter family member 4C1.